A 173-amino-acid polypeptide reads, in one-letter code: Histone deacetylase complex subunit SAP30 homolog (173 aa).

An Atypical zinc finger spans residues 21 to 69 (CCLLDDGDRCRNQAGNASYSKRIQKTVTQRRLKLSIDTAARHIYICDFH).

It belongs to the SAP30 family. As to quaternary structure, component of the class 1 Sin3-histone deacetylase complex (HDAC).

It localises to the nucleus. Its function is as follows. Required for the function of the class 1 Sin3-histone deacetylase complex (HDAC). The polypeptide is Histone deacetylase complex subunit SAP30 homolog (Aedes aegypti (Yellowfever mosquito)).